Consider the following 444-residue polypeptide: Baeyer-Villiger oxidase ptaJ (444 aa).

This sequence belongs to the questin oxidase family. It depends on NADPH as a cofactor.

It functions in the pathway secondary metabolite biosynthesis. Baeyer-Villiger oxidase; part of the gene cluster that mediates the biosynthesis of pestheic acid, a diphenyl ether which is a biosynthetic precursor of the unique chloropupukeananes. The biosynthesis initiates from condensation of acetate and malonate units catalyzed by the non-reducing PKS ptaA. As the ptaA protein is TE/CLC domain-deficient, hydrolysis and Claisen cyclization of the polyketide could be catalyzed by ptaB containing a beta-lactamase domain. The ptaB protein might hydrolyze the thioester bond between the ACP of ptaA and the intermediate to release atrochrysone carboxylic acid, which is spontaneously dehydrated to form endocrocin anthrone. Endocrocin anthrone is then converted to endocrocin, catalyzed by the anthrone oxygenase ptaC. Spontaneous decarboxylation of endocrocin occurs to generate emodin. An O-methyltransferase (ptaH or ptaI) could methylate emodin to form physcion. PtaJ could then catalyze the oxidative cleavage of physcion, and rotation of the intermediate could then afford desmethylisosulochrin. PtaF, a putative NADH-dependent oxidoreductase, might also participate in the oxidative cleavage step. Desmethylisosulochrin is then transformed by another O-methyltransferase (ptaH or ptaI) to form isosulochrin. Chlorination of isosulochrin by ptaM in the cyclohexadienone B ring then produces chloroisosulochrin. PtaE is responsible for the oxidative coupling reactions of both benzophenones isosulouchrin and chloroisosulouchrin to RES-1214-1 and pestheic acid respectively, regardless of chlorination. This chain is Baeyer-Villiger oxidase ptaJ, found in Pestalotiopsis fici (strain W106-1 / CGMCC3.15140).